The sequence spans 514 residues: Peptide chain release factor 3 (514 aa).

The tr-type G domain occupies 8–268; the sequence is KKRRTFAIIS…TFLKFAPEPH (261 aa). GTP contacts are provided by residues 17 to 24, 85 to 89, and 139 to 142; these read SHPDAGKT, DTPGH, and NKLD.

This sequence belongs to the TRAFAC class translation factor GTPase superfamily. Classic translation factor GTPase family. PrfC subfamily.

Its subcellular location is the cytoplasm. Functionally, increases the formation of ribosomal termination complexes and stimulates activities of RF-1 and RF-2. It binds guanine nucleotides and has strong preference for UGA stop codons. It may interact directly with the ribosome. The stimulation of RF-1 and RF-2 is significantly reduced by GTP and GDP, but not by GMP. In Streptococcus pneumoniae (strain Hungary19A-6), this protein is Peptide chain release factor 3.